A 315-amino-acid chain; its full sequence is MTTHRNDTLSTEASDFLLNCFVRSPSWQHWLSLPLSLLFLLAVGANTTLLMTIWLEASLHQPLYYLLSLLSLLDIVLCLTVIPKVLTIFWFDLRPISFPACFLQMYIMNCFLAMESCTFMVMAYDRYVAICHPLRYPSIITDHFVVKAAMFILTRNVLMTLPIPILSAQLRYCGRNVIENCICANMSVSRLSCDDVTINHLYQFAGGWTLLGSDLILIFLSYTFILRAVLRLKAEGAVAKALSTCGSHFMLILFFSTILLVFVLTHVAKKKVSPDVPVLLNVLHHVIPAALNPIIYGVRTQEIKQGMQRLLKKGC.

Over 1–29 (MTTHRNDTLSTEASDFLLNCFVRSPSWQH) the chain is Extracellular. The N-linked (GlcNAc...) asparagine glycan is linked to Asn-6. Residues 30-50 (WLSLPLSLLFLLAVGANTTLL) traverse the membrane as a helical segment. The Cytoplasmic portion of the chain corresponds to 51 to 58 (MTIWLEAS). Residues 59–79 (LHQPLYYLLSLLSLLDIVLCL) form a helical membrane-spanning segment. Residues 80–103 (TVIPKVLTIFWFDLRPISFPACFL) lie on the Extracellular side of the membrane. Cys-101 and Cys-193 are joined by a disulfide. Residues 104-124 (QMYIMNCFLAMESCTFMVMAY) traverse the membrane as a helical segment. At 125 to 143 (DRYVAICHPLRYPSIITDH) the chain is on the cytoplasmic side. The chain crosses the membrane as a helical span at residues 144 to 164 (FVVKAAMFILTRNVLMTLPIP). Over 165–200 (ILSAQLRYCGRNVIENCICANMSVSRLSCDDVTINH) the chain is Extracellular. A glycan (N-linked (GlcNAc...) asparagine) is linked at Asn-185. The chain crosses the membrane as a helical span at residues 201–221 (LYQFAGGWTLLGSDLILIFLS). Topologically, residues 222–241 (YTFILRAVLRLKAEGAVAKA) are cytoplasmic. Residues 242 to 262 (LSTCGSHFMLILFFSTILLVF) traverse the membrane as a helical segment. The Extracellular segment spans residues 263-277 (VLTHVAKKKVSPDVP). The helical transmembrane segment at 278-298 (VLLNVLHHVIPAALNPIIYGV) threads the bilayer. Topologically, residues 299 to 315 (RTQEIKQGMQRLLKKGC) are cytoplasmic.

The protein belongs to the G-protein coupled receptor 1 family.

It localises to the cell membrane. In terms of biological role, odorant receptor. The sequence is that of Olfactory receptor 56A3 (OR56A3) from Homo sapiens (Human).